Reading from the N-terminus, the 355-residue chain is Type II methyltransferase M.MthZI (355 aa).

It belongs to the N(4)/N(6)-methyltransferase family. N(4) subfamily.

The catalysed reaction is a 2'-deoxycytidine in DNA + S-adenosyl-L-methionine = an N(4)-methyl-2'-deoxycytidine in DNA + S-adenosyl-L-homocysteine + H(+). In terms of biological role, a beta subtype methylase that recognizes the double-stranded sequence 5'-CTAG-3', methylates C-1 on both strands, and protects the DNA from cleavage by the MthZI endonuclease. The sequence is that of Type II methyltransferase M.MthZI from Methanothermobacter thermautotrophicus (Methanobacterium thermoformicicum).